The following is a 109-amino-acid chain: Nucleoid-associated protein LGAS_0369 (109 aa).

The protein belongs to the YbaB/EbfC family. Homodimer.

The protein resides in the cytoplasm. It localises to the nucleoid. Its function is as follows. Binds to DNA and alters its conformation. May be involved in regulation of gene expression, nucleoid organization and DNA protection. The sequence is that of Nucleoid-associated protein LGAS_0369 from Lactobacillus gasseri (strain ATCC 33323 / DSM 20243 / BCRC 14619 / CIP 102991 / JCM 1131 / KCTC 3163 / NCIMB 11718 / NCTC 13722 / AM63).